The primary structure comprises 124 residues: Small ribosomal subunit protein uS12 (124 aa).

The disordered stretch occupies residues methionine 1–aspartate 25. 3-methylthioaspartic acid is present on aspartate 89.

It belongs to the universal ribosomal protein uS12 family. As to quaternary structure, part of the 30S ribosomal subunit. Contacts proteins S8 and S17. May interact with IF1 in the 30S initiation complex.

With S4 and S5 plays an important role in translational accuracy. In terms of biological role, interacts with and stabilizes bases of the 16S rRNA that are involved in tRNA selection in the A site and with the mRNA backbone. Located at the interface of the 30S and 50S subunits, it traverses the body of the 30S subunit contacting proteins on the other side and probably holding the rRNA structure together. The combined cluster of proteins S8, S12 and S17 appears to hold together the shoulder and platform of the 30S subunit. The protein is Small ribosomal subunit protein uS12 of Stenotrophomonas maltophilia (strain R551-3).